A 240-amino-acid polypeptide reads, in one-letter code: MILLISDLHLQEERPDISRAFLDLLDGRARHAKALYILGDFFEAWIGDDAMTPFQQSICQAMRRLSDSGTAIYLMHGNRDFLIGQAFCKAAGCTLLNDPSVIELGGEQVLLMHGDTLCTRDLGYMKMRRLLRNPLSLWILRHLPLSARYKLARKLRSESRTQVRMKSTEIVDVTPEEVPKVMAAHGVRTLVHGHTHRPAIHKLMVDGQPARRIVLGDWDRRGWALQVDEQGFQLAPFEFS.

The Mn(2+) site is built by aspartate 7, histidine 9, aspartate 40, asparagine 78, and histidine 113. Asparagine 78–arginine 79 provides a ligand contact to substrate. Residues aspartate 121, serine 159, lysine 166, and histidine 194 each coordinate substrate. Mn(2+)-binding residues include histidine 194 and histidine 196.

The protein belongs to the LpxH family. The cofactor is Mn(2+).

The protein localises to the cell inner membrane. It catalyses the reaction UDP-2-N,3-O-bis[(3R)-3-hydroxytetradecanoyl]-alpha-D-glucosamine + H2O = 2-N,3-O-bis[(3R)-3-hydroxytetradecanoyl]-alpha-D-glucosaminyl 1-phosphate + UMP + 2 H(+). It functions in the pathway glycolipid biosynthesis; lipid IV(A) biosynthesis; lipid IV(A) from (3R)-3-hydroxytetradecanoyl-[acyl-carrier-protein] and UDP-N-acetyl-alpha-D-glucosamine: step 4/6. Its function is as follows. Hydrolyzes the pyrophosphate bond of UDP-2,3-diacylglucosamine to yield 2,3-diacylglucosamine 1-phosphate (lipid X) and UMP by catalyzing the attack of water at the alpha-P atom. Involved in the biosynthesis of lipid A, a phosphorylated glycolipid that anchors the lipopolysaccharide to the outer membrane of the cell. This Pseudomonas putida (strain ATCC 47054 / DSM 6125 / CFBP 8728 / NCIMB 11950 / KT2440) protein is UDP-2,3-diacylglucosamine hydrolase.